The chain runs to 248 residues: Probable transcriptional regulatory protein Mpop_0922 (248 aa).

It belongs to the TACO1 family.

The protein resides in the cytoplasm. This chain is Probable transcriptional regulatory protein Mpop_0922, found in Methylorubrum populi (strain ATCC BAA-705 / NCIMB 13946 / BJ001) (Methylobacterium populi).